Here is a 387-residue protein sequence, read N- to C-terminus: Cyclin-J-like protein (387 aa).

Residues 13-142 (DVHCTLREKE…LLEAFSWDLC (130 aa)) enclose the Cyclin N-terminal domain.

It belongs to the cyclin family. Cyclin J subfamily.

This is Cyclin-J-like protein (Ccnjl) from Mus musculus (Mouse).